The following is a 478-amino-acid chain: Lysine histidine transporter-like 7 (478 aa).

Over 1–63 the chain is Cytoplasmic; that stretch reads MSIALGNLFD…ITESRKGNVY (63 aa). The interval 15–45 is disordered; that stretch reads ESGGSPLFMSPAPSTDPQPISGEKNGGDGGR. Residues 64-86 traverse the membrane as a helical segment; sequence TATFHLLCSGIGLQVILLPAAFA. Residues 87–89 are Extracellular-facing; the sequence is ALG. Residues 90-112 traverse the membrane as a helical segment; the sequence is WVWGTIILTVGFVWKLYTTWLLV. The Cytoplasmic segment spans residues 113-140; that stretch reads QLHEAVPGIRISRYVRLAIASFGVKLGK. A helical transmembrane segment spans residues 141 to 161; it reads LLGIFPVMYLSGGACTILVIT. Residues 162–177 are Extracellular-facing; it reads GGKSIQQLLQIMSDDN. The chain crosses the membrane as a helical span at residues 178-198; it reads TAPLTSVQCFLVFSCIAMIMS. Residues 199–205 are Cytoplasmic-facing; that stretch reads QFPNLNS. Residues 206–226 form a helical membrane-spanning segment; it reads LFGVSLIGAFMGIAYCTVIWI. Topologically, residues 227 to 241 are extracellular; that stretch reads LPVASDSQRTQVSVS. Residues 242–262 traverse the membrane as a helical segment; that stretch reads YATMDKSFVHIFNAIGLIALV. Topologically, residues 263-291 are cytoplasmic; that stretch reads YRGNNLVLEIQGTLPSDSKNPSCKTMWRA. The helical transmembrane segment at 292-312 threads the bilayer; the sequence is VMISHALVAICMFPLTFAVYW. At 313 to 340 the chain is on the extracellular side; that stretch reads AYGDKIPATGGPVGNYLKLYTQEHSKRA. A helical transmembrane segment spans residues 341-361; the sequence is ACFIHLTFIFSCLCSYPINLM. Residues 362 to 379 lie on the Cytoplasmic side of the membrane; sequence PACDNIEMVYITKKKKPA. The helical transmembrane segment at 380-402 threads the bilayer; the sequence is SIIVRMMLRVFLSLVCFTIAVGF. Residues 403 to 406 lie on the Extracellular side of the membrane; sequence PFLP. Residues 407–429 form a helical membrane-spanning segment; it reads YLAVLIGAIALLVTFTYPCFMWI. Over 430 to 439 the chain is Cytoplasmic; the sequence is SIKKPQRKSP. Residues 440 to 460 form a helical membrane-spanning segment; sequence MWLFNVLVGCLGASLSVLLLV. The Extracellular segment spans residues 461 to 478; that stretch reads ASAMRLAQKGLHANFFRP.

This sequence belongs to the amino acid/polyamine transporter 2 family. Amino acid/auxin permease (AAAP) (TC 2.A.18.2) subfamily.

The protein resides in the cell membrane. Its function is as follows. Amino acid transporter. The polypeptide is Lysine histidine transporter-like 7 (Arabidopsis thaliana (Mouse-ear cress)).